Consider the following 605-residue polypeptide: ABC transporter E family member 2 (605 aa).

The 4Fe-4S ferredoxin-type domain occupies 46–75; that stretch reads KLAFISEELCIGCGICVKKCPFEAIQIINL. ABC transporter domains follow at residues 70 to 315 and 344 to 568; these read IQII…FLAG and IQSY…LSHL. ATP-binding positions include 110 to 117 and 381 to 388; these read GTNGIGKS and GENGTGKT.

Belongs to the ABC transporter superfamily. ABCE family. In terms of tissue distribution, expressed in roots, stems, leaves, flowers and siliques.

The protein localises to the membrane. This chain is ABC transporter E family member 2 (ABCE2), found in Arabidopsis thaliana (Mouse-ear cress).